The primary structure comprises 179 residues: Small ribosomal subunit protein uS5 (179 aa).

The S5 DRBM domain occupies M22–V85.

This sequence belongs to the universal ribosomal protein uS5 family. As to quaternary structure, part of the 30S ribosomal subunit. Contacts proteins S4 and S8.

Functionally, with S4 and S12 plays an important role in translational accuracy. Its function is as follows. Located at the back of the 30S subunit body where it stabilizes the conformation of the head with respect to the body. The sequence is that of Small ribosomal subunit protein uS5 from Xylella fastidiosa (strain 9a5c).